Reading from the N-terminus, the 2271-residue chain is Serine-rich adhesin for platelets (2271 aa).

Positions 1-89 (MSKRQKAFHD…VNMLHDQQAF (89 aa)) are cleaved as a signal peptide. Residues 90–230 (AASDAPLTSE…KTSTTSTSTA (141 aa)) form a serine-rich repeat region 1, SRR1 region. The segment covering 100–111 (LNTQSETVGNQN) has biased composition (polar residues). Disordered stretches follow at residues 100–229 (LNTQ…STST), 751–791 (NSMS…VVST), and 806–2243 (SVSA…GLLG). Positions 112–128 (STTIEASTSTADSTSVT) are enriched in low complexity. The segment covering 129–140 (KNSSSVQTSNSD) has biased composition (polar residues). A compositionally biased stretch (low complexity) spans 150–229 (VTSTTNSTSN…NKTSTTSTST (80 aa)). The interval 231–751 (PVKLRTFSRL…TTFKYEVTRN (521 aa)) is non-repeat region (NRR). Composition is skewed to low complexity over residues 752–791 (SMSD…VVST), 806–1392 (SVSA…LSLS), and 1402–2214 (SNSA…ATSE). The tract at residues 752-2232 (SMSDSVSTSG…AQSEKRLPDT (1481 aa)) is serine-rich repeat region 2, SRR2. An LPXTG sorting signal motif is present at residues 2229–2233 (LPDTG). Residue Thr-2232 is modified to Pentaglycyl murein peptidoglycan amidated threonine. Positions 2233-2271 (GDSIKQNGLLGGVMTLLVGLGLMKRKKKKDENDQDDSQA) are cleaved as a propeptide — removed by sortase.

The protein belongs to the serine-rich repeat protein (SRRP) family. Proteolytically cleaved by a metalloprotease. Post-translationally, glycosylated. It is probable that most of the Ser residues in SSR1 and SSR2 are O-GlcNAcylated. Sequential glycosylation by sugar transferases are able to generate complex sugar polymorphisms.

It is found in the secreted. It localises to the cell wall. Its function is as follows. Mediates binding to human platelets, possibly through a receptor-ligand interaction. Probably associated with virulence in endovascular infection. The polypeptide is Serine-rich adhesin for platelets (sraP) (Staphylococcus aureus (strain USA300)).